Here is a 327-residue protein sequence, read N- to C-terminus: Metal-binding protein YtgA (327 aa).

Positions 1–20 (MDAKMGYIFKVMRWIFCFVA) are cleaved as a signal peptide. The Fe(2+) site is built by His-73, His-139, His-205, and Asp-297.

The protein belongs to the bacterial solute-binding protein 9 family. In terms of assembly, monomer.

The protein resides in the periplasm. Part of the ATP-binding cassette (ABC) transport system YtgABCD involved in metal import. Binds Fe(2+), Mn(2+) and Ni(2+), with a preference for Fe(2+) and delivers them to the membrane permease for translocation into the cytoplasm. The polypeptide is Metal-binding protein YtgA (Chlamydia pneumoniae (Chlamydophila pneumoniae)).